The primary structure comprises 728 residues: Fatty acid oxidation complex subunit alpha (728 aa).

The tract at residues 1–189 (MLYQSETIQV…KNGLIDAVVP (189 aa)) is enoyl-CoA hydratase/isomerase. Substrate is bound at residue Asp296. Residues 311-728 (TIPEYAAVLG…TIAVSTGKTA (418 aa)) are 3-hydroxyacyl-CoA dehydrogenase. Residues Met324, Asp343, 400–402 (VVE), Lys407, and Ser429 contribute to the NAD(+) site. Catalysis depends on His450, which acts as the For 3-hydroxyacyl-CoA dehydrogenase activity. Asn453 contacts NAD(+). Positions 500 and 660 each coordinate substrate.

The protein in the N-terminal section; belongs to the enoyl-CoA hydratase/isomerase family. It in the C-terminal section; belongs to the 3-hydroxyacyl-CoA dehydrogenase family. As to quaternary structure, heterotetramer of two alpha chains (FadB) and two beta chains (FadA).

It carries out the reaction a (3S)-3-hydroxyacyl-CoA + NAD(+) = a 3-oxoacyl-CoA + NADH + H(+). The catalysed reaction is a (3S)-3-hydroxyacyl-CoA = a (2E)-enoyl-CoA + H2O. The enzyme catalyses a 4-saturated-(3S)-3-hydroxyacyl-CoA = a (3E)-enoyl-CoA + H2O. It catalyses the reaction (3S)-3-hydroxybutanoyl-CoA = (3R)-3-hydroxybutanoyl-CoA. It carries out the reaction a (3Z)-enoyl-CoA = a 4-saturated (2E)-enoyl-CoA. The catalysed reaction is a (3E)-enoyl-CoA = a 4-saturated (2E)-enoyl-CoA. It functions in the pathway lipid metabolism; fatty acid beta-oxidation. Functionally, involved in the aerobic and anaerobic degradation of long-chain fatty acids via beta-oxidation cycle. Catalyzes the formation of 3-oxoacyl-CoA from enoyl-CoA via L-3-hydroxyacyl-CoA. It can also use D-3-hydroxyacyl-CoA and cis-3-enoyl-CoA as substrate. In Photorhabdus laumondii subsp. laumondii (strain DSM 15139 / CIP 105565 / TT01) (Photorhabdus luminescens subsp. laumondii), this protein is Fatty acid oxidation complex subunit alpha.